Here is a 431-residue protein sequence, read N- to C-terminus: Protein S-Myc (431 aa).

Residue Tyr-36 is modified to Phosphotyrosine; by Tyr-kinases. Positions 348–400 (ERRRNHNRMERQRRDIMRSSFLNLRDLVPELVHNEKAAKVVILKKATEYIHTL) constitute a bHLH domain. Residues 400-421 (LQADESKLLVERKKLYERQQQL) are leucine-zipper.

In terms of assembly, efficient DNA binding requires dimerization with another bHLH protein.

It localises to the nucleus. In terms of biological role, has apoptosis-inducing activity. In Mus musculus (Mouse), this protein is Protein S-Myc (Mycs).